Here is a 568-residue protein sequence, read N- to C-terminus: 2-isopropylmalate synthase (568 aa).

Residues 37-313 enclose the Pyruvate carboxyltransferase domain; that stretch reads PRWLSTDLRD…DPMIDFSNID (277 aa). Positions 46, 252, 254, and 288 each coordinate Mg(2+). The regulatory domain stretch occupies residues 455–568; sequence EGVVGVMAYR…CSAVNRAQQS (114 aa).

This sequence belongs to the alpha-IPM synthase/homocitrate synthase family. LeuA type 2 subfamily. In terms of assembly, homodimer. The cofactor is Mg(2+).

The protein resides in the cytoplasm. It carries out the reaction 3-methyl-2-oxobutanoate + acetyl-CoA + H2O = (2S)-2-isopropylmalate + CoA + H(+). It functions in the pathway amino-acid biosynthesis; L-leucine biosynthesis; L-leucine from 3-methyl-2-oxobutanoate: step 1/4. Its function is as follows. Catalyzes the condensation of the acetyl group of acetyl-CoA with 3-methyl-2-oxobutanoate (2-ketoisovalerate) to form 3-carboxy-3-hydroxy-4-methylpentanoate (2-isopropylmalate). The chain is 2-isopropylmalate synthase from Thermobifida fusca (strain YX).